The primary structure comprises 493 residues: Ketol-acid reductoisomerase (NADP(+)) (493 aa).

Positions leucine 14 to serine 208 constitute a KARI N-terminal Rossmann domain. NADP(+)-binding positions include cysteine 45–glutamine 48, arginine 68, arginine 76, serine 78, and aspartate 108–glutamine 110. The active site involves histidine 132. Glycine 158 contacts NADP(+). 2 consecutive KARI C-terminal knotted domains span residues serine 209–glycine 345 and glutamate 346–methionine 486. Residues aspartate 217, glutamate 221, glutamate 390, and glutamate 394 each contribute to the Mg(2+) site. Residue serine 415 participates in substrate binding.

The protein belongs to the ketol-acid reductoisomerase family. It depends on Mg(2+) as a cofactor.

It catalyses the reaction (2R)-2,3-dihydroxy-3-methylbutanoate + NADP(+) = (2S)-2-acetolactate + NADPH + H(+). The catalysed reaction is (2R,3R)-2,3-dihydroxy-3-methylpentanoate + NADP(+) = (S)-2-ethyl-2-hydroxy-3-oxobutanoate + NADPH + H(+). It participates in amino-acid biosynthesis; L-isoleucine biosynthesis; L-isoleucine from 2-oxobutanoate: step 2/4. Its pathway is amino-acid biosynthesis; L-valine biosynthesis; L-valine from pyruvate: step 2/4. In terms of biological role, involved in the biosynthesis of branched-chain amino acids (BCAA). Catalyzes an alkyl-migration followed by a ketol-acid reduction of (S)-2-acetolactate (S2AL) to yield (R)-2,3-dihydroxy-isovalerate. In the isomerase reaction, S2AL is rearranged via a Mg-dependent methyl migration to produce 3-hydroxy-3-methyl-2-ketobutyrate (HMKB). In the reductase reaction, this 2-ketoacid undergoes a metal-dependent reduction by NADPH to yield (R)-2,3-dihydroxy-isovalerate. This Histophilus somni (strain 129Pt) (Haemophilus somnus) protein is Ketol-acid reductoisomerase (NADP(+)).